The sequence spans 514 residues: Double-stranded RNA-binding protein 6 (514 aa).

2 DRBM domains span residues 1 to 70 (MYKN…ALAR) and 87 to 155 (VYKN…SLRQ). Disordered regions lie at residues 195-268 (NNPH…SRFP) and 455-496 (EASQ…KDDH). Polar residues-rich tracts occupy residues 216 to 225 (FPQSSHSSYS), 249 to 263 (AASQ…SPNP), and 473 to 484 (SPDSLPKTQLKT).

In terms of biological role, binds double-stranded RNA. In Oryza sativa subsp. japonica (Rice), this protein is Double-stranded RNA-binding protein 6 (DRB6).